The chain runs to 88 residues: MKGLAAALLVLCTVALCSCAQVGTKKEFCCLVYTSRQIPQKFIVDYSETSPQCTKPGVILLSKKRRQICADPNKKWVQKYISDLKLNA.

Positions 1 to 19 are cleaved as a signal peptide; it reads MKGLAAALLVLCTVALCSC. Cystine bridges form between Cys29/Cys53 and Cys30/Cys69.

This sequence belongs to the intercrine beta (chemokine CC) family. In terms of processing, the Cys-29/Cys-53 disulfide bond is required for activity.

The protein resides in the secreted. Chemotactic factor that attracts lymphocytes but not monocytes or granulocytes. May be involved in B-cell migration into B-cell follicles in lymph nodes. Attracts naive T-lymphocytes toward dendritic cells and activated macrophages in lymph nodes, has chemotactic activity for naive T-cells, CD4+ and CD8+ T-cells and thus may play a role in both humoral and cell-mediated immunity responses. The sequence is that of C-C motif chemokine 18 (CCL18) from Macaca mulatta (Rhesus macaque).